The chain runs to 279 residues: Tryptophan 2,3-dioxygenase (279 aa).

Residues 48-52 (FIIQH), tyrosine 110, and arginine 114 each bind substrate. A heme-binding site is contributed by histidine 237. Threonine 251 contacts substrate.

It belongs to the tryptophan 2,3-dioxygenase family. As to quaternary structure, homotetramer. Requires heme as cofactor.

The enzyme catalyses L-tryptophan + O2 = N-formyl-L-kynurenine. The protein operates within amino-acid degradation; L-tryptophan degradation via kynurenine pathway; L-kynurenine from L-tryptophan: step 1/2. Functionally, heme-dependent dioxygenase that catalyzes the oxidative cleavage of the L-tryptophan (L-Trp) pyrrole ring and converts L-tryptophan to N-formyl-L-kynurenine. Catalyzes the oxidative cleavage of the indole moiety. This is Tryptophan 2,3-dioxygenase from Bradyrhizobium diazoefficiens (strain JCM 10833 / BCRC 13528 / IAM 13628 / NBRC 14792 / USDA 110).